Here is a 295-residue protein sequence, read N- to C-terminus: Ribosomal protein L11 methyltransferase (295 aa).

S-adenosyl-L-methionine-binding residues include T139, G166, D188, and N231.

It belongs to the methyltransferase superfamily. PrmA family.

Its subcellular location is the cytoplasm. It carries out the reaction L-lysyl-[protein] + 3 S-adenosyl-L-methionine = N(6),N(6),N(6)-trimethyl-L-lysyl-[protein] + 3 S-adenosyl-L-homocysteine + 3 H(+). Its function is as follows. Methylates ribosomal protein L11. The polypeptide is Ribosomal protein L11 methyltransferase (Cyanothece sp. (strain PCC 7425 / ATCC 29141)).